We begin with the raw amino-acid sequence, 199 residues long: Peroxiredoxin-1 (199 aa).

Serine 2 carries the N-acetylserine modification. Positions 6–165 (AKIGHRAPQF…TLRLVQAFQF (160 aa)) constitute a Thioredoxin domain. Lysine 7 carries the N6-acetyllysine; alternate modification. Lysine 7 participates in a covalent cross-link: Glycyl lysine isopeptide (Lys-Gly) (interchain with G-Cter in SUMO2); alternate. Lysine 16 and lysine 27 each carry N6-acetyllysine. Residue lysine 35 is modified to N6-acetyllysine; alternate. N6-succinyllysine; alternate is present on lysine 35. The Cysteine sulfenic acid (-SOH) intermediate role is filled by cysteine 52. Phosphothreonine is present on threonine 90. A Glycyl lysine isopeptide (Lys-Gly) (interchain with G-Cter in SUMO2) cross-link involves residue lysine 120. The residue at position 136 (lysine 136) is an N6-acetyllysine. A disordered region spans residues 176–199 (GWKPGSDTIKPDVQKSKEYFSKQK). The span at 184–199 (IKPDVQKSKEYFSKQK) shows a compositional bias: basic and acidic residues. Lysine 185 participates in a covalent cross-link: Glycyl lysine isopeptide (Lys-Gly) (interchain with G-Cter in SUMO1). At lysine 197 the chain carries N6-acetyllysine.

Belongs to the peroxiredoxin family. AhpC/Prx1 subfamily. As to quaternary structure, homodimer; disulfide-linked, upon oxidation. 5 homodimers assemble to form a ring-like decamer. Interacts with GDPD5; forms a mixed-disulfide with GDPD5. Interacts with SESN1 and SESN2. Interacts with FAM107A. In terms of processing, phosphorylated on Thr-90 during the M-phase, which leads to a decrease in enzymatic activity. Acetylation increases reducing activity and resistance to superoxidation. Deacetylated by HDAC6 which decreases reducing activity.

It localises to the cytoplasm. It carries out the reaction a hydroperoxide + [thioredoxin]-dithiol = an alcohol + [thioredoxin]-disulfide + H2O. In terms of biological role, thiol-specific peroxidase that catalyzes the reduction of hydrogen peroxide and organic hydroperoxides to water and alcohols, respectively. Plays a role in cell protection against oxidative stress by detoxifying peroxides and as sensor of hydrogen peroxide-mediated signaling events. Might participate in the signaling cascades of growth factors and tumor necrosis factor-alpha by regulating the intracellular concentrations of H(2)O(2). Reduces an intramolecular disulfide bond in GDPD5 that gates the ability to GDPD5 to drive postmitotic motor neuron differentiation. The sequence is that of Peroxiredoxin-1 (PRDX1) from Bos taurus (Bovine).